The primary structure comprises 144 residues: Maximins 1/H12 (144 aa).

An N-terminal signal peptide occupies residues 1–18 (MNFKYIVAVSFLIASAYA). Residues 19–43 (RSEENDEQSLSQRDVLEEESLREIR) constitute a propeptide that is removed on maturation. Asparagine 70 is modified (asparagine amide). The propeptide occupies 74 to 123 (TAEEHEVMKRLEVVMRDLDSLDYPEEASERETRDFNQEEIANLYTKKEKR). Isoleucine 143 is subject to Isoleucine amide.

Belongs to the bombinin family. In terms of tissue distribution, expressed by the skin glands.

It localises to the secreted. In terms of biological role, maximin-1 shows antibacterial activity against both Gram-positive and Gram-negative bacteria. It also shows antimicrobial activity against the fungus C.albicans, but not against A.flavus nor P.uticale. It has little hemolytic activity. It possess a significant cytotoxicity against tumor cell lines. It does not possess a significant anti-HIV activity. It shows high spermicidal activity. Maximin-H12 shows antimicrobial activity against bacteria and against the fungus C.albicans. Shows strong hemolytic activity. The sequence is that of Maximins 1/H12 from Bombina maxima (Giant fire-bellied toad).